Here is a 219-residue protein sequence, read N- to C-terminus: 2-C-methyl-D-erythritol 4-phosphate cytidylyltransferase (219 aa).

It belongs to the IspD/TarI cytidylyltransferase family. IspD subfamily.

It catalyses the reaction 2-C-methyl-D-erythritol 4-phosphate + CTP + H(+) = 4-CDP-2-C-methyl-D-erythritol + diphosphate. It participates in isoprenoid biosynthesis; isopentenyl diphosphate biosynthesis via DXP pathway; isopentenyl diphosphate from 1-deoxy-D-xylulose 5-phosphate: step 2/6. Its function is as follows. Catalyzes the formation of 4-diphosphocytidyl-2-C-methyl-D-erythritol from CTP and 2-C-methyl-D-erythritol 4-phosphate (MEP). In Bacteroides fragilis (strain ATCC 25285 / DSM 2151 / CCUG 4856 / JCM 11019 / LMG 10263 / NCTC 9343 / Onslow / VPI 2553 / EN-2), this protein is 2-C-methyl-D-erythritol 4-phosphate cytidylyltransferase.